Here is a 334-residue protein sequence, read N- to C-terminus: Ornithine carbamoyltransferase (334 aa).

Residues S56–T59, Q83, R107, and H134–Q137 each bind carbamoyl phosphate. L-ornithine is bound by residues N168, D232, and S236 to M237. Carbamoyl phosphate is bound by residues C274 to L275 and R320.

The protein belongs to the aspartate/ornithine carbamoyltransferase superfamily. OTCase family.

Its subcellular location is the cytoplasm. The catalysed reaction is carbamoyl phosphate + L-ornithine = L-citrulline + phosphate + H(+). It functions in the pathway amino-acid biosynthesis; L-arginine biosynthesis; L-arginine from L-ornithine and carbamoyl phosphate: step 1/3. In terms of biological role, reversibly catalyzes the transfer of the carbamoyl group from carbamoyl phosphate (CP) to the N(epsilon) atom of ornithine (ORN) to produce L-citrulline. The polypeptide is Ornithine carbamoyltransferase (Escherichia coli O157:H7).